A 370-amino-acid chain; its full sequence is 3-dehydroquinate synthase (370 aa).

Residues 108 to 112, 132 to 133, lysine 145, and lysine 154 each bind NAD(+); these read GVVGD and TT. The Zn(2+) site is built by glutamate 187, histidine 250, and histidine 268.

Belongs to the sugar phosphate cyclases superfamily. Dehydroquinate synthase family. The cofactor is Co(2+). Requires Zn(2+) as cofactor. It depends on NAD(+) as a cofactor.

The protein localises to the cytoplasm. The catalysed reaction is 7-phospho-2-dehydro-3-deoxy-D-arabino-heptonate = 3-dehydroquinate + phosphate. The protein operates within metabolic intermediate biosynthesis; chorismate biosynthesis; chorismate from D-erythrose 4-phosphate and phosphoenolpyruvate: step 2/7. Its function is as follows. Catalyzes the conversion of 3-deoxy-D-arabino-heptulosonate 7-phosphate (DAHP) to dehydroquinate (DHQ). The polypeptide is 3-dehydroquinate synthase (Caulobacter vibrioides (strain NA1000 / CB15N) (Caulobacter crescentus)).